We begin with the raw amino-acid sequence, 65 residues long: UPF0434 protein CPS_2127 (65 aa).

The protein belongs to the UPF0434 family.

This chain is UPF0434 protein CPS_2127, found in Colwellia psychrerythraea (strain 34H / ATCC BAA-681) (Vibrio psychroerythus).